The primary structure comprises 279 residues: DegV domain-containing protein SAR1438 (279 aa).

A DegV domain is found at 4–278 (QIIVTDSTSD…QGAIGLVVLK (275 aa)). Residues T61 and S93 each contribute to the hexadecanoate site.

Its function is as follows. May bind long-chain fatty acids, such as palmitate, and may play a role in lipid transport or fatty acid metabolism. The polypeptide is DegV domain-containing protein SAR1438 (Staphylococcus aureus (strain MRSA252)).